A 145-amino-acid polypeptide reads, in one-letter code: D-aminoacyl-tRNA deacylase (145 aa).

The Gly-cisPro motif, important for rejection of L-amino acids motif lies at 137–138 (GP).

Belongs to the DTD family. Homodimer.

It is found in the cytoplasm. It carries out the reaction glycyl-tRNA(Ala) + H2O = tRNA(Ala) + glycine + H(+). It catalyses the reaction a D-aminoacyl-tRNA + H2O = a tRNA + a D-alpha-amino acid + H(+). Its function is as follows. An aminoacyl-tRNA editing enzyme that deacylates mischarged D-aminoacyl-tRNAs. Also deacylates mischarged glycyl-tRNA(Ala), protecting cells against glycine mischarging by AlaRS. Acts via tRNA-based rather than protein-based catalysis; rejects L-amino acids rather than detecting D-amino acids in the active site. By recycling D-aminoacyl-tRNA to D-amino acids and free tRNA molecules, this enzyme counteracts the toxicity associated with the formation of D-aminoacyl-tRNA entities in vivo and helps enforce protein L-homochirality. The sequence is that of D-aminoacyl-tRNA deacylase from Shewanella pealeana (strain ATCC 700345 / ANG-SQ1).